Consider the following 879-residue polypeptide: Translation initiation factor IF-2 (879 aa).

The segment at 48–261 is disordered; sequence EAFPPPPEPA…RPHKSKKQRR (214 aa). Over residues 82–111 the composition is skewed to low complexity; it reads PAADAAAPPAVTTPPSAAPAGATTSAPSDA. Composition is skewed to pro residues over residues 119-142, 152-163, and 173-197; these read PPRP…PSGP, SPMPRPMPPRPV, and PGIP…PPRP. Low complexity predominate over residues 198-213; that stretch reads AAGRAAPGRGAPIRLP. Residues 228–246 are compositionally biased toward gly residues; that stretch reads PGVGGRGRGAPGGAFGRGP. The span at 251-260 shows a compositional bias: basic residues; it reads SRPHKSKKQR. The region spanning 372 to 543 is the tr-type G domain; sequence PRPPVVTVMG…AILLTADAAL (172 aa). The tract at residues 381–388 is G1; sequence GHVDHGKT. 381-388 contributes to the GTP binding site; sequence GHVDHGKT. The tract at residues 406-410 is G2; it reads GITQH. The interval 431–434 is G3; it reads DTPG. Residues 431–435 and 485–488 contribute to the GTP site; these read DTPGH and NKID. The tract at residues 485–488 is G4; the sequence is NKID. The tract at residues 521–523 is G5; the sequence is SAL.

The protein belongs to the TRAFAC class translation factor GTPase superfamily. Classic translation factor GTPase family. IF-2 subfamily.

The protein localises to the cytoplasm. One of the essential components for the initiation of protein synthesis. Protects formylmethionyl-tRNA from spontaneous hydrolysis and promotes its binding to the 30S ribosomal subunits. Also involved in the hydrolysis of GTP during the formation of the 70S ribosomal complex. The sequence is that of Translation initiation factor IF-2 from Acidothermus cellulolyticus (strain ATCC 43068 / DSM 8971 / 11B).